Reading from the N-terminus, the 1548-residue chain is Dicer-like protein 1 (1548 aa).

The segment covering 1 to 41 (MGDPAAHEMADLERGFSSEDDAEYRSGDDEASKFVENEPSK) has biased composition (basic and acidic residues). The disordered stretch occupies residues 1–48 (MGDPAAHEMADLERGFSSEDDAEYRSGDDEASKFVENEPSKRGKISQK). Residues 106 to 289 (LFERAKQQNT…QAAIELEGLL (184 aa)) form the Helicase ATP-binding domain. 119–126 (LDTGSGKT) contributes to the ATP binding site. The short motif at 232 to 235 (DEAH) is the DEAH box element. The region spanning 428 to 589 (TLSKLLEEYF…FCNTQPEDRL (162 aa)) is the Helicase C-terminal domain. One can recognise a Dicer dsRNA-binding fold domain in the interval 624–718 (SLPILQAFLN…RSKFVEKRHV (95 aa)). The PAZ domain occupies 871-1006 (PLLRHVADRD…FVLEPMRISP (136 aa)). RNase III domains are found at residues 1051 to 1197 (LTKD…MTTR) and 1248 to 1411 (AQKI…VDSK). Positions 1288, 1397, and 1400 each coordinate Mg(2+). Residues 1445 to 1518 (TFFTQYVFET…ARKALDKLRS (74 aa)) form the DRBM domain. Zn(2+) is bound by residues cysteine 1457, histidine 1489, cysteine 1530, and cysteine 1532.

The protein belongs to the helicase family. Dicer subfamily. It depends on Mg(2+) as a cofactor. Requires Mn(2+) as cofactor.

Dicer-like endonuclease involved in cleaving double-stranded RNA in the RNA interference (RNAi) pathway. Produces 21 to 25 bp dsRNAs (siRNAs) which target the selective destruction of homologous RNAs leading to sequence-specific suppression of gene expression, called post-transcriptional gene silencing (PTGS). Part of a broad host defense response against viral infection and transposons. This Cryphonectria parasitica (Chestnut blight fungus) protein is Dicer-like protein 1 (DCL-1).